The primary structure comprises 211 residues: MWWTPIPEDIVRDPAAFRVGRLTKAHGLKGAVKLELFTDDPDKRFVPGAEFSLQVPESSPWHGRTLTLTELRWYNSHPVGFFDGVADRTAAESLAKAILWMTPPADEAAEPDAWYDHQLVGLTVLRDGVEVGTVSLVDHFPAQDLLHVDTPSGTVLVPFVQAIVPSVDVEAGTLVVTPPLGLFEEIPDETPTAEPTPAEAAEPAPEGDDAR.

Residues 111–182 enclose the PRC barrel domain; it reads PDAWYDHQLV…TLVVTPPLGL (72 aa). Residues 184–211 are disordered; that stretch reads EEIPDETPTAEPTPAEAAEPAPEGDDAR. Residues 189-204 show a composition bias toward low complexity; it reads ETPTAEPTPAEAAEPA.

Belongs to the RimM family. As to quaternary structure, binds ribosomal protein uS19.

Its subcellular location is the cytoplasm. In terms of biological role, an accessory protein needed during the final step in the assembly of 30S ribosomal subunit, possibly for assembly of the head region. Essential for efficient processing of 16S rRNA. May be needed both before and after RbfA during the maturation of 16S rRNA. It has affinity for free ribosomal 30S subunits but not for 70S ribosomes. The protein is Ribosome maturation factor RimM of Clavibacter michiganensis subsp. michiganensis (strain NCPPB 382).